Consider the following 322-residue polypeptide: Nodulation protein Z (322 aa).

One can recognise a GT23 domain in the interval Met1–Glu314.

The protein belongs to the glycosyltransferase 23 family.

Functionally, fucosyltransferase which adds the fucose moiety of the nod factor on its terminal reducing N-acetylglucosamine end. Uses GDP-fucose as the donor group. In Sinorhizobium fredii (strain NBRC 101917 / NGR234), this protein is Nodulation protein Z (nodZ).